A 412-amino-acid chain; its full sequence is Phytoene synthase, chloroplastic (412 aa).

It belongs to the phytoene/squalene synthase family. In terms of assembly, monomer. In terms of tissue distribution, expressed in roots, leaves, flower buds, sepals, petals, lips and lip crests.

It localises to the plastid. The protein localises to the chloroplast. The catalysed reaction is 2 (2E,6E,10E)-geranylgeranyl diphosphate = 15-cis-phytoene + 2 diphosphate. The protein operates within carotenoid biosynthesis; phytoene biosynthesis; all-trans-phytoene from geranylgeranyl diphosphate: step 1/1. In terms of biological role, catalyzes the reaction from prephytoene diphosphate to phytoene. The polypeptide is Phytoene synthase, chloroplastic (PSY) (Oncidium hybrid cultivar (Orchid)).